Consider the following 132-residue polypeptide: MNIALIAHDQKKELMVNFAIAYKHIFEKCNIYATGHTGQLIKEATGLNVNCLLPGPLGGDQQIGAMIAENKIDMVIFLRDPLTAQPHEPDILALLRVCDVHSIPLATNIATAEVLLKGMEQGLLEWREIEDK.

An MGS-like domain is found at 1–132 (MNIALIAHDQ…LLEWREIEDK (132 aa)). The substrate site is built by H8 and K12. D60 acts as the Proton donor/acceptor in catalysis. Residue H87 participates in substrate binding.

It belongs to the methylglyoxal synthase family.

The enzyme catalyses dihydroxyacetone phosphate = methylglyoxal + phosphate. Catalyzes the formation of methylglyoxal from dihydroxyacetone phosphate. In Thermoanaerobacter pseudethanolicus (strain ATCC 33223 / 39E) (Clostridium thermohydrosulfuricum), this protein is Methylglyoxal synthase.